Here is a 393-residue protein sequence, read N- to C-terminus: NAD(P)H-quinone oxidoreductase subunit H, chloroplastic (393 aa).

The protein belongs to the complex I 49 kDa subunit family. As to quaternary structure, NDH is composed of at least 16 different subunits, 5 of which are encoded in the nucleus.

It localises to the plastid. Its subcellular location is the chloroplast thylakoid membrane. The enzyme catalyses a plastoquinone + NADH + (n+1) H(+)(in) = a plastoquinol + NAD(+) + n H(+)(out). The catalysed reaction is a plastoquinone + NADPH + (n+1) H(+)(in) = a plastoquinol + NADP(+) + n H(+)(out). Its function is as follows. NDH shuttles electrons from NAD(P)H:plastoquinone, via FMN and iron-sulfur (Fe-S) centers, to quinones in the photosynthetic chain and possibly in a chloroplast respiratory chain. The immediate electron acceptor for the enzyme in this species is believed to be plastoquinone. Couples the redox reaction to proton translocation, and thus conserves the redox energy in a proton gradient. The polypeptide is NAD(P)H-quinone oxidoreductase subunit H, chloroplastic (Nandina domestica (Heavenly bamboo)).